The primary structure comprises 106 residues: Large ribosomal subunit protein P1 (106 aa).

The span at 66–76 (AQPQATQAQPA) shows a compositional bias: low complexity. Residues 66–106 (AQPQATQAQPAAEEKKEEKKEEEKKGPSEEEIASGLASLFG) form a disordered region. A compositionally biased stretch (basic and acidic residues) spans 77 to 93 (AEEKKEEKKEEEKKGPS).

It belongs to the eukaryotic ribosomal protein P1/P2 family. As to quaternary structure, part of the 50S ribosomal subunit. Homodimer, it forms part of the ribosomal stalk which helps the ribosome interact with GTP-bound translation factors. Forms a heptameric uL10/P0(P1)2(P1)2(P1)2 complex, where uL10/P0 forms an elongated spine to which the P1 dimers bind in a sequential fashion.

Forms part of the ribosomal stalk, playing a central role in the interaction of the ribosome with GTP-bound translation factors. This chain is Large ribosomal subunit protein P1, found in Saccharolobus solfataricus (strain ATCC 35092 / DSM 1617 / JCM 11322 / P2) (Sulfolobus solfataricus).